Consider the following 155-residue polypeptide: Protein-export protein SecB (155 aa).

This sequence belongs to the SecB family. In terms of assembly, homotetramer, a dimer of dimers. One homotetramer interacts with 1 SecA dimer.

Its subcellular location is the cytoplasm. Its function is as follows. One of the proteins required for the normal export of preproteins out of the cell cytoplasm. It is a molecular chaperone that binds to a subset of precursor proteins, maintaining them in a translocation-competent state. It also specifically binds to its receptor SecA. In Vibrio vulnificus (strain CMCP6), this protein is Protein-export protein SecB.